The primary structure comprises 245 residues: 8-amino-3,8-dideoxy-manno-octulosonate cytidylyltransferase (245 aa).

This sequence belongs to the KdsB family.

It localises to the cytoplasm. It catalyses the reaction 8-amino-3,8-dideoxy-alpha-D-manno-octulosonate + CTP = CMP-8-amino-3,8-dideoxy-alpha-D-manno-oct-2-ulosonate + diphosphate. It participates in bacterial outer membrane biogenesis; lipopolysaccharide biosynthesis. Its function is as follows. Activates KDO8N (a required 8-carbon sugar) for incorporation into bacterial lipopolysaccharide in the Shewanella genus. The polypeptide is 8-amino-3,8-dideoxy-manno-octulosonate cytidylyltransferase (Shewanella frigidimarina (strain NCIMB 400)).